The following is a 204-amino-acid chain: dTTP/UTP pyrophosphatase (204 aa).

Catalysis depends on D68, which acts as the Proton acceptor.

This sequence belongs to the Maf family. YhdE subfamily. It depends on a divalent metal cation as a cofactor.

It localises to the cytoplasm. The enzyme catalyses dTTP + H2O = dTMP + diphosphate + H(+). It catalyses the reaction UTP + H2O = UMP + diphosphate + H(+). Nucleoside triphosphate pyrophosphatase that hydrolyzes dTTP and UTP. May have a dual role in cell division arrest and in preventing the incorporation of modified nucleotides into cellular nucleic acids. In Thermotoga petrophila (strain ATCC BAA-488 / DSM 13995 / JCM 10881 / RKU-1), this protein is dTTP/UTP pyrophosphatase.